Consider the following 434-residue polypeptide: Urokinase-type plasminogen activator (434 aa).

The first 20 residues, 1–20 (MKLIIFLTVTLCTLVTGLDS), serve as a signal peptide directing secretion. The EGF-like domain occupies 36–72 (QHRECQCLNGGTCITYRFFSQIKRCLCPEGYGGLHCE). Cystine bridges form between Cys-40/Cys-48, Cys-42/Cys-60, Cys-62/Cys-71, Cys-79/Cys-158, Cys-96/Cys-139, Cys-128/Cys-152, Cys-162/Cys-296, Cys-202/Cys-218, Cys-210/Cys-285, Cys-310/Cys-379, Cys-342/Cys-358, and Cys-369/Cys-397. In terms of domain architecture, Kringle spans 79-158 (CYSGNGEDYR…ETPCSTIEKC (80 aa)). Residues 159–172 (ERTCGQRSFSKYFK) are connecting peptide. The Peptidase S1 domain occupies 173-421 (IVGGSQAEVE…YLNWIDSNMN (249 aa)). His-217 serves as the catalytic Charge relay system. An N-linked (GlcNAc...) asparagine glycan is attached at Asn-228. Asp-272 (charge relay system) is an active-site residue. Ser-373 (charge relay system) is an active-site residue.

The protein belongs to the peptidase S1 family.

The protein resides in the secreted. It catalyses the reaction Specific cleavage of Arg-|-Val bond in plasminogen to form plasmin.. Functionally, specifically cleaves the zymogen plasminogen to form the active enzyme plasmin. The protein is Urokinase-type plasminogen activator (PLAU) of Gallus gallus (Chicken).